We begin with the raw amino-acid sequence, 205 residues long: High frequency lysogenization protein HflD homolog (205 aa).

Belongs to the HflD family.

It is found in the cytoplasm. Its subcellular location is the cell inner membrane. This Vibrio parahaemolyticus serotype O3:K6 (strain RIMD 2210633) protein is High frequency lysogenization protein HflD homolog.